We begin with the raw amino-acid sequence, 2293 residues long: Protein Ycf2 A (2293 aa).

1647–1654 is an ATP binding site; sequence GSIGTGRS.

It belongs to the Ycf2 family.

The protein localises to the plastid. It is found in the chloroplast stroma. Probable ATPase of unknown function. Its presence in a non-photosynthetic plant (Epifagus virginiana) and experiments in tobacco indicate that it has an essential function which is probably not related to photosynthesis. The protein is Protein Ycf2 A of Crucihimalaya wallichii (Rock-cress).